A 763-amino-acid polypeptide reads, in one-letter code: DNA polymerase 3 (763 aa).

The protein belongs to the DNA polymerase type-B family.

It carries out the reaction DNA(n) + a 2'-deoxyribonucleoside 5'-triphosphate = DNA(n+1) + diphosphate. This Saccharolobus shibatae (strain ATCC 51178 / DSM 5389 / JCM 8931 / NBRC 15437 / B12) (Sulfolobus shibatae) protein is DNA polymerase 3 (dpo3).